Consider the following 873-residue polypeptide: Paramyosin (873 aa).

Residues M1–T25 are nonhelical region. Residues D26–T852 adopt a coiled-coil conformation. Residues T853–F873 form a nonhelical region region.

Belongs to the paramyosin family. Homodimer. Binds IgG and collagen. As to expression, expressed in all tissues except in saliva.

It is found in the cytoplasm. It localises to the myofibril. Its function is as follows. Paramyosin is a major structural component of many thick filaments isolated from invertebrate muscles. This chain is Paramyosin (PRM), found in Rhipicephalus microplus (Cattle tick).